Consider the following 26-residue polypeptide: Dermaseptin-B5 (26 aa).

At V26 the chain carries Valine amide.

The protein belongs to the frog skin active peptide (FSAP) family. Dermaseptin subfamily. In terms of tissue distribution, expressed by the skin glands.

The protein localises to the secreted. Functionally, possesses a potent antimicrobial activity against Gram-positive and Gram-negative bacteria. Probably acts by disturbing membrane functions with its amphipathic structure. The protein is Dermaseptin-B5 of Phyllomedusa bicolor (Two-colored leaf frog).